We begin with the raw amino-acid sequence, 218 residues long: MGCSASKDTTNSKDGAASKGGKDGKTTADRKVAWERIRCAIPRDKDAESKSRRIELFKQFDTNGTGKLGFREVLDGCYGILKLDEFTTHLPDIVQRAFDKAKDLGNKVKGVGEEDLVEFLEFRLMLCYIYDIFELTVMFDTMDKDGSLLLELQEFKEALPKLKEWGVDITDATTVFNEIDTNGSGVVTFDEFSCWAVTKKLQVCGDPDGEENGANEGN.

The disordered stretch occupies residues 1 to 27 (MGCSASKDTTNSKDGAASKGGKDGKTT). EF-hand domains are found at residues 48–83 (ESKSRRIELFKQFDTNGTGKLGFREVLDGCYGILKL), 84–119 (DEFTTHLPDIVQRAFDKAKDLGNKVKGVGEEDLVEF), 130–165 (YDIFELTVMFDTMDKDGSLLLELQEFKEALPKLKEW), and 167–202 (VDITDATTVFNEIDTNGSGVVTFDEFSCWAVTKKLQ). Ca(2+) contacts are provided by aspartate 61, asparagine 63, threonine 65, lysine 67, and glutamate 72. The Ca(2+) site is built by aspartate 143, aspartate 145, serine 147, glutamate 154, aspartate 180, asparagine 182, serine 184, and glutamate 191.

It belongs to the calflagin family.

It is found in the cell projection. Its subcellular location is the cilium. It localises to the flagellum. Its function is as follows. May contribute to the rapid motility of the trypanosomes, playing a role either in flagellar structure or in calcium metabolism. Could alternate between a GDP-bound inactive form to a calcium/GTP-bound active form. In Trypanosoma brucei brucei, this protein is Flagellar calcium-binding protein TB-24.